We begin with the raw amino-acid sequence, 147 residues long: Hemoglobin subunit gamma (147 aa).

Residues 3–147 form the Globin domain; it reads DFTAEEKAAI…VASAVARKYH (145 aa). Heme b-binding residues include H64 and H93.

It belongs to the globin family. Heterotetramer of two alpha chains and two gamma chains in fetal hemoglobin (Hb F). Red blood cells.

Gamma chains make up the fetal hemoglobin F, in combination with alpha chains. In Trichechus manatus (Caribbean manatee), this protein is Hemoglobin subunit gamma (HBG).